The chain runs to 627 residues: 5-aminolevulinate synthase, non-specific, mitochondrial (627 aa).

The N-terminal 58 residues, methionine 1–serine 58, are a transit peptide targeting the mitochondrion. Substrate is bound by residues arginine 204, serine 321, and lysine 340. Positions 373, 401, and 429 each coordinate pyridoxal 5'-phosphate. Lysine 432 is an active-site residue. Lysine 432 is subject to N6-(pyridoxal phosphate)lysine. The pyridoxal 5'-phosphate site is built by threonine 461 and threonine 462. Threonine 549 serves as a coordination point for substrate.

It belongs to the class-II pyridoxal-phosphate-dependent aminotransferase family. As to quaternary structure, homodimer. Pyridoxal 5'-phosphate serves as cofactor.

The protein localises to the mitochondrion inner membrane. The catalysed reaction is succinyl-CoA + glycine + H(+) = 5-aminolevulinate + CO2 + CoA. The protein operates within porphyrin-containing compound metabolism; protoporphyrin-IX biosynthesis; 5-aminolevulinate from glycine: step 1/1. In terms of biological role, catalyzes the pyridoxal 5'-phosphate (PLP)-dependent condensation of succinyl-CoA and glycine to form aminolevulinic acid (ALA), with CoA and CO2 as by-products. The protein is 5-aminolevulinate synthase, non-specific, mitochondrial (alas1) of Opsanus tau (Oyster toadfish).